The sequence spans 477 residues: Monocarboxylate transporter 12-B (477 aa).

Topologically, residues 1–9 (MAQEKKKGG) are cytoplasmic. The next 12 helical transmembrane spans lie at 10 to 30 (VLPPDGGWGWMIVAGCFVVTV), 58 to 78 (AWIHSLVDCTTMLCAPLGSLI), 86 to 106 (IAVILGGFLASVGLVLSSFAT), 116 to 136 (GLLTGLGFALCYTPAIAMVGI), 148 to 168 (IAMSGSGIGTFILAPVVQLLI), 178 to 198 (LILGGFVLNLCVCGALLRPII), 253 to 273 (FLVLAGSFLLLASGCSLPFVY), 289 to 309 (AFLMSILGVIDIVGNITFGWL), 320 to 340 (NICYMFAVGMEGLCCLFIPLL), 344 to 364 (VWLVPFSVLYGYFDGAYVALI), 383 to 403 (VVYFLHAVPYLVSPPIGGWLV), and 413 to 433 (FFLSGFALISSSLLLFSVAII). The Cytoplasmic segment spans residues 434–477 (RYCQRNQKKNSLSKIPKLVSCEGKQVDYYPPKNKDLMLIIPATS).

It belongs to the major facilitator superfamily. Monocarboxylate porter (TC 2.A.1.13) family.

Its subcellular location is the cell membrane. It localises to the basolateral cell membrane. The catalysed reaction is creatine(in) = creatine(out). It carries out the reaction guanidinoacetate(in) = guanidinoacetate(out). Functions as a transporter for creatine and as well for its precursor guanidinoacetate. Transport of creatine and GAA is independent of resting membrane potential and extracellular Na(+), Cl(-), or pH. Contributes to the process of creatine biosynthesis and distribution. In Danio rerio (Zebrafish), this protein is Monocarboxylate transporter 12-B (slc16a12b).